Reading from the N-terminus, the 337-residue chain is Cytoskeleton protein RodZ (337 aa).

Residues 1-111 (MNTEATHDQN…LGKRRKKRDG (111 aa)) are Cytoplasmic-facing. Positions 19–71 (LRNAREQLGLSQQAVAERLCLKVSTVRDIEEDKAPADLASTFLRGYIRSYARL) constitute an HTH cro/C1-type domain. The H-T-H motif DNA-binding region spans 30-49 (QQAVAERLCLKVSTVRDIEE). A helical; Signal-anchor for type II membrane protein transmembrane segment spans residues 112-132 (WLMTFTWLVLFVVIGLSGAWW). Over 133 to 337 (WQDHKAQQEE…TLNAEQSPAQ (205 aa)) the chain is Periplasmic. Residues 145–167 (TMADQSSAELSSNSEQGQSVPLN) show a composition bias toward polar residues. The interval 145-236 (TMADQSSAEL…TAATTPDGAA (92 aa)) is disordered. The segment covering 168 to 207 (TSTTTDPATTSTPPASVDTTATNTQTPAVTAPAPAVDPQQ) has biased composition (low complexity). Polar residues predominate over residues 208-218 (NAVVSPSQANV). Residues 219 to 236 (DTAATPAPTAATTPDGAA) show a composition bias toward low complexity.

It belongs to the RodZ family.

Its subcellular location is the cell inner membrane. In terms of biological role, cytoskeletal protein that is involved in cell-shape control through regulation of the length of the long axis. In Escherichia coli O9:H4 (strain HS), this protein is Cytoskeleton protein RodZ.